Here is a 147-residue protein sequence, read N- to C-terminus: uncharacterized protein (147 aa).

The chain crosses the membrane as a helical span at residues 3 to 23 (APMIGMVVLVVVLGLAVLALS).

The protein to M.leprae ML1147.

It is found in the membrane. This is an uncharacterized protein from Mycobacterium tuberculosis (strain CDC 1551 / Oshkosh).